The sequence spans 426 residues: Histidine--tRNA ligase (426 aa).

This sequence belongs to the class-II aminoacyl-tRNA synthetase family. Homodimer.

Its subcellular location is the cytoplasm. It carries out the reaction tRNA(His) + L-histidine + ATP = L-histidyl-tRNA(His) + AMP + diphosphate + H(+). The sequence is that of Histidine--tRNA ligase from Streptococcus equi subsp. zooepidemicus (strain H70).